The chain runs to 257 residues: Serine/arginine-rich splicing factor 1 (257 aa).

Position 2 is an N-acetylserine (Ser2). The 76-residue stretch at 16 to 91 (CRIYVGNLPP…YRLRVEFPRS (76 aa)) folds into the RRM 1 domain. The tract at residues 88–116 (FPRSGRGTGRGGGGGGGGGAPRGRYGPPS) is disordered. A compositionally biased stretch (gly residues) spans 93–108 (RGTGRGGGGGGGGGAP). One can recognise an RRM 2 domain in the interval 121 to 195 (YRVIVSGLPP…ETAYIRVKVD (75 aa)).

It localises to the cytoplasm. The protein localises to the nucleus speckle. In terms of biological role, may play a role in preventing exon skipping, ensuring the accuracy of splicing and regulating alternative splicing. This is Serine/arginine-rich splicing factor 1 (SRSF1) from Gallus gallus (Chicken).